The sequence spans 459 residues: Cobyrinate a,c-diamide synthase (459 aa).

One can recognise a GATase cobBQ-type domain in the interval 249 to 446 (RIGMAFDEAF…VHTHFASRPG (198 aa)). The active-site Nucleophile is the C332.

The protein belongs to the CobB/CbiA family. The cofactor is Mg(2+).

The catalysed reaction is cob(II)yrinate + 2 L-glutamine + 2 ATP + 2 H2O = cob(II)yrinate a,c diamide + 2 L-glutamate + 2 ADP + 2 phosphate + 2 H(+). It participates in cofactor biosynthesis; adenosylcobalamin biosynthesis; cob(II)yrinate a,c-diamide from sirohydrochlorin (anaerobic route): step 10/10. In terms of biological role, catalyzes the ATP-dependent amidation of the two carboxylate groups at positions a and c of cobyrinate, using either L-glutamine or ammonia as the nitrogen source. The chain is Cobyrinate a,c-diamide synthase from Syntrophotalea carbinolica (strain DSM 2380 / NBRC 103641 / GraBd1) (Pelobacter carbinolicus).